Reading from the N-terminus, the 129-residue chain is MDWLDDVKWDAQGLVPVIAQEQGTGDVLMLAWMNREALRQTAALGRAVYFSRSRGKLWFKGEDSGHAQTVHEIRLDCDRDVLLLRVTQQGHQPGIACHTGRHSCFFSRLGDGAWQAVDAVLKDPRAIYG.

Asp-76 is a Mg(2+) binding site. Cys-77 provides a ligand contact to Zn(2+). Mg(2+) contacts are provided by Asp-78 and Asp-80. 2 residues coordinate Zn(2+): Cys-97 and Cys-104.

It belongs to the PRA-CH family. As to quaternary structure, homodimer. Mg(2+) is required as a cofactor. Zn(2+) serves as cofactor.

It is found in the cytoplasm. The catalysed reaction is 1-(5-phospho-beta-D-ribosyl)-5'-AMP + H2O = 1-(5-phospho-beta-D-ribosyl)-5-[(5-phospho-beta-D-ribosylamino)methylideneamino]imidazole-4-carboxamide. The protein operates within amino-acid biosynthesis; L-histidine biosynthesis; L-histidine from 5-phospho-alpha-D-ribose 1-diphosphate: step 3/9. In terms of biological role, catalyzes the hydrolysis of the adenine ring of phosphoribosyl-AMP. This Verminephrobacter eiseniae (strain EF01-2) protein is Phosphoribosyl-AMP cyclohydrolase.